The primary structure comprises 41 residues: Large ribosomal subunit protein bL36 (41 aa).

The protein belongs to the bacterial ribosomal protein bL36 family.

The sequence is that of Large ribosomal subunit protein bL36 from Methylobacterium nodulans (strain LMG 21967 / CNCM I-2342 / ORS 2060).